A 334-amino-acid chain; its full sequence is Thioredoxin reductase aclT (334 aa).

FAD contacts are provided by residues 16–19 (GGPA), 38–43 (NASIDR), I93, A122, D294, and 302–303 (TL).

This sequence belongs to the class-II pyridine nucleotide-disulfide oxidoreductase family. In terms of assembly, homodimer. FAD serves as cofactor.

Its pathway is mycotoxin biosynthesis. Functionally, thioredoxin reductase; part of the gene cluster that mediates the biosynthesis of aspirochlorine (or antibiotic A30641), an unusual halogenated spiro compound with distinctive antifungal properties due to selective inhibition of protein biosynthesis, and which is also active against bacteria, viruses, and murine tumor cells. The non-ribosomal peptide synthetase (NRPS) aclP is responsible the formation of the diketopiperazine (DKP) core from the condensation of 2 phenylalanine residues. One Phe residue is tailored into chlorotyrosine by hydroxylation and chlorination, whereas the second Phe undergoes an unprecedented C-C bond cleavage to be converted into glycine. After formation of the DKP, sulfur is incorporated into the DKP by conjugation with glutathione by aclG, followed by its stepwise degradation to the thiol by aclI, aclJ and aclK, and the dithiol oxidation by aclT. In addition, oxygenases (aclB, aclC, aclL and aclO) and O-methyltransferases (aclM and aclU) act as tailoring enzymes to produce the intermediate dechloroaspirochlorine. Ultimately, chlorination of dechloroaspirochlorine by the halogenase aclH is the last step in the aspirochlorine pathway. This Aspergillus oryzae (strain ATCC 42149 / RIB 40) (Yellow koji mold) protein is Thioredoxin reductase aclT.